A 180-amino-acid polypeptide reads, in one-letter code: MFMNLLTQVSNAIFPQVEAAQKMSNRAVAVLRGETVTGTIWITQKSENDQAVIEGEIKGLTPGLHGFHVHQYGDSTNGCISAGPHFNPFGKTHGGPKSEIRHVGDLGNVEAGADGVAKIKLTDTLVTLYGPNTVVGRSMVVHAGQDDLGEGVGDKAEESKKTGNAGARAACGVIALAAPQ.

The N-terminal stretch at 1–19 (MFMNLLTQVSNAIFPQVEA) is a signal peptide. H68, H70, and H85 together coordinate Cu cation. C79 and C171 are joined by a disulfide. H85, H93, H102, and D105 together coordinate Zn(2+). Position 142 (H142) interacts with Cu cation.

It belongs to the Cu-Zn superoxide dismutase family. As to quaternary structure, homodimer. Cu cation serves as cofactor. It depends on Zn(2+) as a cofactor.

Its subcellular location is the cytoplasm. The catalysed reaction is 2 superoxide + 2 H(+) = H2O2 + O2. With respect to regulation, the insertion of copper which activates the protein requires glutathione. This is independent of copper chaperone for SOD1 (CCS), which activates orthologs. Functionally, protects cells against oxidative stress by converting superoxide radicals to hydrogen peroxide. Required for normal brood size. May be involved in regulating mpk-1 phosphorylation downstream of phosphatase ptp-2 during oocyte maturation. In Caenorhabditis elegans, this protein is Superoxide dismutase [Cu-Zn] (sod-1).